The following is a 129-amino-acid chain: Small ribosomal subunit protein uS9 (129 aa).

The protein belongs to the universal ribosomal protein uS9 family.

The chain is Small ribosomal subunit protein uS9 from Chlorobium phaeovibrioides (strain DSM 265 / 1930) (Prosthecochloris vibrioformis (strain DSM 265)).